We begin with the raw amino-acid sequence, 195 residues long: Interferon tau-6 (195 aa).

An N-terminal signal peptide occupies residues 1–23; that stretch reads MAFVLSLLMALVLVSYGPGGSLG. Intrachain disulfides connect cysteine 24-cysteine 122 and cysteine 52-cysteine 162. Residue asparagine 101 is glycosylated (N-linked (GlcNAc...) asparagine).

This sequence belongs to the alpha/beta interferon family. IFN-alphaII subfamily. Constitutively and exclusively expressed in the mononuclear cells of the extraembryonic trophectoderm.

It is found in the secreted. Its function is as follows. Paracrine hormone primarily responsible for maternal recognition of pregnancy. Interacts with endometrial receptors, probably type I interferon receptors, and blocks estrogen receptor expression, preventing the estrogen-induced increase in oxytocin receptor expression in the endometrium. This results in the suppression of the pulsatile endometrial release of the luteolytic hormone prostaglandin F2-alpha, hindering the regression of the corpus luteum (luteolysis) and therefore a return to ovarian cyclicity. This, and a possible direct effect of IFN-tau on prostaglandin synthesis, leads in turn to continued ovarian progesterone secretion, which stimulates the secretion by the endometrium of the nutrients required for the growth of the conceptus. In summary, displays particularly high antiviral and antiproliferative potency concurrently with particular weak cytotoxicity, high antiluteolytic activity and immunomodulatory properties. In contrast with other IFNs, IFN-tau is not virally inducible. This chain is Interferon tau-6 (IFNT6), found in Ovis aries (Sheep).